The primary structure comprises 305 residues: Type II secretion system protein C (305 aa).

Topologically, residues 1–29 (MEFKQLPPLAAWPRLLSQNTLRWQKPISE) are cytoplasmic. A helical membrane pass occupies residues 30–50 (GLTLLLLVASAWTLGKMVWVV). The Periplasmic segment spans residues 51–305 (SAEQTPVPTW…GQQHDVYIQF (255 aa)).

Belongs to the GSP C family.

The protein localises to the cell inner membrane. Its function is as follows. Involved in a type II secretion system (T2SS, formerly general secretion pathway, GSP) for the export of proteins. Required for secretion of cholera toxin through the outer membrane. The polypeptide is Type II secretion system protein C (epsC) (Vibrio cholerae serotype O1 (strain ATCC 39315 / El Tor Inaba N16961)).